Reading from the N-terminus, the 517-residue chain is Crotonobetaine/carnitine--CoA ligase (517 aa).

The protein belongs to the ATP-dependent AMP-binding enzyme family.

It carries out the reaction 4-(trimethylamino)butanoate + ATP + CoA = 4-(trimethylamino)butanoyl-CoA + AMP + diphosphate. It catalyses the reaction crotonobetaine + ATP + CoA = crotonobetainyl-CoA + AMP + diphosphate. The enzyme catalyses (R)-carnitine + ATP + CoA = (R)-carnitinyl-CoA + AMP + diphosphate. It functions in the pathway amine and polyamine metabolism; carnitine metabolism. Functionally, catalyzes the transfer of CoA to carnitine, generating the initial carnitinyl-CoA needed for the CaiB reaction cycle. Also has activity toward crotonobetaine and gamma-butyrobetaine. The protein is Crotonobetaine/carnitine--CoA ligase of Salmonella choleraesuis (strain SC-B67).